The sequence spans 86 residues: Protein U17 (86 aa).

This Homo sapiens (Human) protein is Protein U17 (U17/U16).